The chain runs to 249 residues: Structural protein VP10 (249 aa).

The protein localises to the virion. In terms of biological role, forms the virion spike 'foot' and helps anchor the VP9 spike 'head' protein in the virion. The polypeptide is Structural protein VP10 (Segment-10) (Banna virus (BAV)).